Here is a 503-residue protein sequence, read N- to C-terminus: Glutamate--tRNA ligase (503 aa).

Positions 12 to 22 (PSPTGYLHVGG) match the 'HIGH' region motif. The 'KMSKS' region motif lies at 259–263 (KLSKR). Lys262 serves as a coordination point for ATP.

Belongs to the class-I aminoacyl-tRNA synthetase family. Glutamate--tRNA ligase type 1 subfamily. In terms of assembly, monomer.

The protein resides in the cytoplasm. The enzyme catalyses tRNA(Glu) + L-glutamate + ATP = L-glutamyl-tRNA(Glu) + AMP + diphosphate. Its function is as follows. Catalyzes the attachment of glutamate to tRNA(Glu) in a two-step reaction: glutamate is first activated by ATP to form Glu-AMP and then transferred to the acceptor end of tRNA(Glu). This is Glutamate--tRNA ligase from Chloroherpeton thalassium (strain ATCC 35110 / GB-78).